A 237-amino-acid chain; its full sequence is Phosphoribosylaminoimidazole-succinocarboxamide synthase (237 aa).

It belongs to the SAICAR synthetase family.

It catalyses the reaction 5-amino-1-(5-phospho-D-ribosyl)imidazole-4-carboxylate + L-aspartate + ATP = (2S)-2-[5-amino-1-(5-phospho-beta-D-ribosyl)imidazole-4-carboxamido]succinate + ADP + phosphate + 2 H(+). It participates in purine metabolism; IMP biosynthesis via de novo pathway; 5-amino-1-(5-phospho-D-ribosyl)imidazole-4-carboxamide from 5-amino-1-(5-phospho-D-ribosyl)imidazole-4-carboxylate: step 1/2. In Yersinia enterocolitica serotype O:8 / biotype 1B (strain NCTC 13174 / 8081), this protein is Phosphoribosylaminoimidazole-succinocarboxamide synthase.